We begin with the raw amino-acid sequence, 270 residues long: Aliphatic sulfonates import ATP-binding protein SsuB (270 aa).

The ABC transporter domain occupies 17-238; sequence LASKGLRKTF…ARGSHRLAAL (222 aa). An ATP-binding site is contributed by 49–56; it reads GRSGCGKS. Residues 248–270 are disordered; that stretch reads STPGTAPEPDPVAPLPTQLRWAH.

It belongs to the ABC transporter superfamily. Aliphatic sulfonates importer (TC 3.A.1.17.2) family. In terms of assembly, the complex is composed of two ATP-binding proteins (SsuB), two transmembrane proteins (SsuC) and a solute-binding protein (SsuA).

Its subcellular location is the cell inner membrane. It carries out the reaction ATP + H2O + aliphatic sulfonate-[sulfonate-binding protein]Side 1 = ADP + phosphate + aliphatic sulfonateSide 2 + [sulfonate-binding protein]Side 1.. Part of the ABC transporter complex SsuABC involved in aliphatic sulfonates import. Responsible for energy coupling to the transport system. This is Aliphatic sulfonates import ATP-binding protein SsuB from Pseudomonas putida (strain ATCC 47054 / DSM 6125 / CFBP 8728 / NCIMB 11950 / KT2440).